A 515-amino-acid chain; its full sequence is MVPMLWLTAYMAVAVLTAILLNVVYQLFFRLWNRTEPPMVFHWVPYLGSTISYGIDPYKFFFACREKYGDIFTFILLGQKTTVYLGVQGNEFILNGKLKDVNAEEVYSPLTTPVFGSDVVYDCPNSKLMEQKKFIKYGLTQSALESHVPLIEKEVLDYLRDSPNFQGSSGRVDISAAMAEITIFTAARALQGQEVRSKLTAEFADLYHDLDKGFTPINFMLPWAPLPHNKKRDAAHARMRSIYVDIITQRRLDGEKDSQKSDMIWNLMNCTYKNGQQVPDKEIAHMMITLLMAGQHSSSSISAWIMLRLASQPKVLEELYQEQLANLGPAGPDGSLPPLQYKDLDKLPFHQHVIRETLRIHSSIHSIMRKVKSPLPVPGTPYMIPPGRVLLASPGVTALSDEHFPNAGCWDPHRWENQATKEQENDKVVDYGYGAVSKGTSSPYLPFGAGRHRCIGEKFAYVNLGVILATIVRHLRLFNVDGKKGVPETDYSSLFSGPMKPSIIGWEKRSKNTSK.

Residues 7 to 29 form a helical membrane-spanning segment; the sequence is LTAYMAVAVLTAILLNVVYQLFF. N-linked (GlcNAc...) asparagine glycans are attached at residues N33 and N269. C454 lines the heme pocket. The N-linked (GlcNAc...) asparagine glycan is linked to N512.

It belongs to the cytochrome P450 family. It depends on heme as a cofactor.

The protein resides in the endoplasmic reticulum membrane. It carries out the reaction a 14alpha-methyl steroid + 3 reduced [NADPH--hemoprotein reductase] + 3 O2 = a Delta(14) steroid + formate + 3 oxidized [NADPH--hemoprotein reductase] + 4 H2O + 4 H(+). It catalyses the reaction a 14alpha-methyl steroid + reduced [NADPH--hemoprotein reductase] + O2 = a 14alpha-hydroxymethyl steroid + oxidized [NADPH--hemoprotein reductase] + H2O + H(+). The enzyme catalyses a 14alpha-hydroxymethyl steroid + reduced [NADPH--hemoprotein reductase] + O2 = a 14alpha-formyl steroid + oxidized [NADPH--hemoprotein reductase] + 2 H2O + H(+). The catalysed reaction is a 14alpha-formyl steroid + reduced [NADPH--hemoprotein reductase] + O2 = a Delta(14) steroid + formate + oxidized [NADPH--hemoprotein reductase] + H2O + 2 H(+). It carries out the reaction lanosterol + 3 reduced [NADPH--hemoprotein reductase] + 3 O2 = 4,4-dimethyl-5alpha-cholesta-8,14,24-trien-3beta-ol + formate + 3 oxidized [NADPH--hemoprotein reductase] + 4 H2O + 4 H(+). It catalyses the reaction lanosterol + reduced [NADPH--hemoprotein reductase] + O2 = 32-hydroxylanosterol + oxidized [NADPH--hemoprotein reductase] + H2O + H(+). The enzyme catalyses 32-hydroxylanosterol + reduced [NADPH--hemoprotein reductase] + O2 = 32-oxolanosterol + oxidized [NADPH--hemoprotein reductase] + 2 H2O + H(+). The catalysed reaction is 32-oxolanosterol + reduced [NADPH--hemoprotein reductase] + O2 = 4,4-dimethyl-5alpha-cholesta-8,14,24-trien-3beta-ol + formate + oxidized [NADPH--hemoprotein reductase] + H2O + 2 H(+). It carries out the reaction eburicol + 3 reduced [NADPH--hemoprotein reductase] + 3 O2 = 14-demethyleburicol + formate + 3 oxidized [NADPH--hemoprotein reductase] + 4 H2O + 4 H(+). It catalyses the reaction eburicol + reduced [NADPH--hemoprotein reductase] + O2 = 32-hydroxyeburicol + oxidized [NADPH--hemoprotein reductase] + H2O + H(+). The enzyme catalyses 32-hydroxyeburicol + reduced [NADPH--hemoprotein reductase] + O2 = 32-oxoeburicol + oxidized [NADPH--hemoprotein reductase] + 2 H2O + H(+). The catalysed reaction is 32-oxoeburicol + reduced [NADPH--hemoprotein reductase] + O2 = 14-demethyleburicol + formate + oxidized [NADPH--hemoprotein reductase] + H2O + 2 H(+). It participates in steroid metabolism; ergosterol biosynthesis. With respect to regulation, the sterol 14-alpha demethylase activity is inhibited by azole compounds. Activity is inhibited by the novel and long-acting fungicidal azole, PC1244. Its function is as follows. Sterol 14alpha-demethylase, encoded by cyp51A and cyp51B, that plays a critical role in the third module of ergosterol biosynthesis pathway, being ergosterol the major sterol component in fungal membranes that participates in a variety of functions. The third module or late pathway involves the ergosterol synthesis itself through consecutive reactions that mainly occur in the endoplasmic reticulum (ER) membrane. In filamentous fungi, during the initial step of this module, lanosterol (lanosta-8,24-dien-3beta-ol) can be metabolized to eburicol. Sterol 14alpha-demethylase catalyzes the three-step oxidative removal of the 14alpha-methyl group (C-32) of both these sterols in the form of formate, and converts eburicol and lanosterol to 14-demethyleburicol (4,4,24-trimethylergosta-8,14,24(28)-trienol) and 4,4-dimethyl-5alpha-cholesta-8,14,24-trien-3beta-ol, respectively, which are further metabolized by other enzymes in the pathway to ergosterol. Can also use substrates not intrinsic to fungi, such as 24,25-dihydrolanosterol (DHL), producing 4,4'-dimethyl-8,14-cholestadien-3-beta-ol, but at lower rates than the endogenous substrates. As a target of azole drugs, plays a crucial role in azole susceptibility. This chain is Sterol 14-alpha demethylase cyp51A, found in Aspergillus fumigatus (strain ATCC MYA-4609 / CBS 101355 / FGSC A1100 / Af293) (Neosartorya fumigata).